A 701-amino-acid polypeptide reads, in one-letter code: Elongation factor G (701 aa).

One can recognise a tr-type G domain in the interval 11–287 (SRVRNFGIMA…AVVDYLPSPL (277 aa)). Residues 20-27 (AHIDAGKT), 84-88 (DTPGH), and 138-141 (NKMD) contribute to the GTP site.

This sequence belongs to the TRAFAC class translation factor GTPase superfamily. Classic translation factor GTPase family. EF-G/EF-2 subfamily.

The protein localises to the cytoplasm. Catalyzes the GTP-dependent ribosomal translocation step during translation elongation. During this step, the ribosome changes from the pre-translocational (PRE) to the post-translocational (POST) state as the newly formed A-site-bound peptidyl-tRNA and P-site-bound deacylated tRNA move to the P and E sites, respectively. Catalyzes the coordinated movement of the two tRNA molecules, the mRNA and conformational changes in the ribosome. In Mycobacterium tuberculosis (strain CDC 1551 / Oshkosh), this protein is Elongation factor G (fusA).